The primary structure comprises 560 residues: Dihydroxy-acid dehydratase (560 aa).

Asp-78 contacts Mg(2+). Cys-119 serves as a coordination point for [2Fe-2S] cluster. Mg(2+)-binding residues include Asp-120 and Lys-121. At Lys-121 the chain carries N6-carboxylysine. Cys-192 is a [2Fe-2S] cluster binding site. Glu-446 contributes to the Mg(2+) binding site. The active-site Proton acceptor is the Ser-472.

It belongs to the IlvD/Edd family. In terms of assembly, homodimer. [2Fe-2S] cluster serves as cofactor. The cofactor is Mg(2+).

The catalysed reaction is (2R)-2,3-dihydroxy-3-methylbutanoate = 3-methyl-2-oxobutanoate + H2O. It carries out the reaction (2R,3R)-2,3-dihydroxy-3-methylpentanoate = (S)-3-methyl-2-oxopentanoate + H2O. It participates in amino-acid biosynthesis; L-isoleucine biosynthesis; L-isoleucine from 2-oxobutanoate: step 3/4. Its pathway is amino-acid biosynthesis; L-valine biosynthesis; L-valine from pyruvate: step 3/4. In terms of biological role, functions in the biosynthesis of branched-chain amino acids. Catalyzes the dehydration of (2R,3R)-2,3-dihydroxy-3-methylpentanoate (2,3-dihydroxy-3-methylvalerate) into 2-oxo-3-methylpentanoate (2-oxo-3-methylvalerate) and of (2R)-2,3-dihydroxy-3-methylbutanoate (2,3-dihydroxyisovalerate) into 2-oxo-3-methylbutanoate (2-oxoisovalerate), the penultimate precursor to L-isoleucine and L-valine, respectively. This Anaeromyxobacter dehalogenans (strain 2CP-C) protein is Dihydroxy-acid dehydratase.